Consider the following 396-residue polypeptide: MAVSMACARPLISVYSEKGESSGKNVTMPAVFRAPIRPDIVNFVHTNLRKNNRQPYAVSKLAGHQTSAESWGTGRAVARIPRVRGGGTHRSGQGAFGNMCRGGRMFAPTKTWRRWHRRVNTTQKRYAVCSALAASALPALIMSKGHRIEEIPEVPLVVEDKVESYKKTKEAVLLLKKLKAWNDIKKVYASQRMRAGKGKMRNRRRIQRRGPCVIYNENNGLVKAFRNIPGITLLNVSKLNLLRLAPGGHVGRFCIWTESAFRKLDDLYGTWRKSAKLKADYNLPMHKMTNTDLTRILKSQEIQRALRAPNKKVKRRELKKNPLKNLRIMMRLNPYAKTARRHAILQQLENIKAKEKKPDDGKPKAKKPLDAKTKMIKLAKAKKRQAREAAKAAETK.

The segment covering 352–373 has biased composition (basic and acidic residues); that stretch reads KAKEKKPDDGKPKAKKPLDAKT. The tract at residues 352 to 374 is disordered; that stretch reads KAKEKKPDDGKPKAKKPLDAKTK.

It belongs to the universal ribosomal protein uL4 family. As to quaternary structure, component of the large ribosomal subunit.

The protein localises to the cytoplasm. Its function is as follows. Component of the large ribosomal subunit. The ribosome is a large ribonucleoprotein complex responsible for the synthesis of proteins in the cell. This Xenopus laevis (African clawed frog) protein is Large ribosomal subunit protein uL4A (rpl4-a).